A 570-amino-acid chain; its full sequence is MKMSNMLMLTLRESPAEAEIESHKLMLRSGMIRKMASGVYNYMPLGLKALKKVENIIREEMNAAGAQEFLASALLPSELWKESGRWEVFGPEMFKLKDRNEREFCLGPTHEEVFTDFARSEIKSYKQLPVNLYQIQTKYRDERRPRFGMIRSREFVMKDAYSFDKDNEGLDVSYNKMYEAYTKIFKRCNVSCSAVAADSGAMGGSGSAEFMVKSEIGEDEIAFCTECNYAANIEKAPAVPEKADKEELGELKKVETPHAKTIEELVEFFGVDSKKFVKTIIYRAENKVVAVMVRGDREVNETKVKNAVGSVDVELADEKTVKKATGAEVGFAGPIGLDVDYLLIDNEVTYMYNFIVGANETGYHYANANYDRDFKGTVGDFRNAVEGEKCPKCGKPLTIARGIEVGHIFKLGTKYSEAMKAYFVDENGESKPLIMGCYGIGVNRTMSAVVEQHHDDNGIVWPLSVAPYEVIVVPAVFKSEEQMKEAEKLYTELKKIGVDALLDDRNERAGVKFKDADLIGIPMRITVGKKISEGKVEFKCRNSEEVEVIDLDKVIARVEEEFEKNNLALK.

It belongs to the class-II aminoacyl-tRNA synthetase family. ProS type 1 subfamily. As to quaternary structure, homodimer.

It localises to the cytoplasm. It carries out the reaction tRNA(Pro) + L-proline + ATP = L-prolyl-tRNA(Pro) + AMP + diphosphate. Its function is as follows. Catalyzes the attachment of proline to tRNA(Pro) in a two-step reaction: proline is first activated by ATP to form Pro-AMP and then transferred to the acceptor end of tRNA(Pro). As ProRS can inadvertently accommodate and process non-cognate amino acids such as alanine and cysteine, to avoid such errors it has two additional distinct editing activities against alanine. One activity is designated as 'pretransfer' editing and involves the tRNA(Pro)-independent hydrolysis of activated Ala-AMP. The other activity is designated 'posttransfer' editing and involves deacylation of mischarged Ala-tRNA(Pro). The misacylated Cys-tRNA(Pro) is not edited by ProRS. In Clostridium acetobutylicum (strain ATCC 824 / DSM 792 / JCM 1419 / IAM 19013 / LMG 5710 / NBRC 13948 / NRRL B-527 / VKM B-1787 / 2291 / W), this protein is Proline--tRNA ligase.